Consider the following 105-residue polypeptide: MKVRKGDTVLVISGKDKGAKGKVLVAYPDRNKVLVEGVNRIKKHTPESRTERGASSGGIVTQEAPISVSNVMLLDSDGKPTRVGYRRDDETGKNVRIAKSNGKDI.

The protein belongs to the universal ribosomal protein uL24 family. As to quaternary structure, part of the 50S ribosomal subunit.

Functionally, one of two assembly initiator proteins, it binds directly to the 5'-end of the 23S rRNA, where it nucleates assembly of the 50S subunit. Its function is as follows. One of the proteins that surrounds the polypeptide exit tunnel on the outside of the subunit. The protein is Large ribosomal subunit protein uL24 of Mycolicibacterium vanbaalenii (strain DSM 7251 / JCM 13017 / BCRC 16820 / KCTC 9966 / NRRL B-24157 / PYR-1) (Mycobacterium vanbaalenii).